A 275-amino-acid chain; its full sequence is NADPH-dependent 7-cyano-7-deazaguanine reductase (275 aa).

Residue 81–83 coordinates substrate; that stretch reads IES. 83 to 84 lines the NADPH pocket; the sequence is SK. Cys181 (thioimide intermediate) is an active-site residue. The Proton donor role is filled by Asp188. 220–221 is a binding site for substrate; the sequence is HE. 249-250 contributes to the NADPH binding site; sequence RG.

Belongs to the GTP cyclohydrolase I family. QueF type 2 subfamily. Homodimer.

The protein resides in the cytoplasm. The catalysed reaction is 7-aminomethyl-7-carbaguanine + 2 NADP(+) = 7-cyano-7-deazaguanine + 2 NADPH + 3 H(+). It participates in tRNA modification; tRNA-queuosine biosynthesis. Its function is as follows. Catalyzes the NADPH-dependent reduction of 7-cyano-7-deazaguanine (preQ0) to 7-aminomethyl-7-deazaguanine (preQ1). This is NADPH-dependent 7-cyano-7-deazaguanine reductase from Xylella fastidiosa (strain 9a5c).